Here is a 299-residue protein sequence, read N- to C-terminus: UBX domain-containing protein 1 (299 aa).

Disordered regions lie at residues 39–61 (AGVP…SGAP), 127–176 (KAKL…NEDE), and 191–218 (EARK…APPK). The segment covering 46–61 (DAPAQAAPGAADSGAP) has biased composition (low complexity). Positions 111–179 (AKVLEIREKI…REKNEDEIAR (69 aa)) form a coiled coil. Over residues 128 to 176 (AKLEAEENREKEKKRREDGKAMISHKEAARDREIREAAQDRRREKNEDE) the composition is skewed to basic and acidic residues. Positions 201–213 (PVPEAKPAPSAAP) are enriched in low complexity. The UBX domain occupies 218-295 (KDYSTTTLQF…NLVPSANVIL (78 aa)).

Interacts with cdc-48.1 (via N-terminus) and cdc-48.2 (via N-terminus) in vitro; the interaction with cdc-48.1 is not detected in vivo. In terms of tissue distribution, expressed in the germline (at protein level). Expressed in spermatocytes but not in mature sperm (at protein level). Ubiquitously expressed. Predominantly expressed in the spermatheca.

Its subcellular location is the cytoplasm. It is found in the perinuclear region. Its function is as follows. Ubiquitin-binding protein which acts as an adapter for ATPase cdc-48.1 and/or cdc-48.2, conferring substrate specificity. Together with ubxn-2 and ubxn-3, plays a role in hermaphrodite spermatogenesis probably by promoting the degradation of sex determination terminal factor tra-1. This chain is UBX domain-containing protein 1, found in Caenorhabditis elegans.